Here is a 334-residue protein sequence, read N- to C-terminus: ABC transporter L-arabinose-binding periplasmic protein (334 aa).

Residues 1 to 30 form the signal peptide; that stretch reads MNRTIRRHTLRALLAALCIAPLGMQGAARA.

This sequence belongs to the bacterial solute-binding protein 2 family. The complex is composed of two ATP-binding proteins (AraG), two transmembrane proteins (AraH) and a solute-binding protein (AraF).

It localises to the periplasm. Part of the ABC transporter complex AraFGH involved in L-arabinose import. Binds with high affinity to L-arabinose. The sequence is that of ABC transporter L-arabinose-binding periplasmic protein (araF) from Azospirillum brasilense.